The chain runs to 202 residues: N-(5'-phosphoribosyl)anthranilate isomerase (202 aa).

Belongs to the TrpF family.

It carries out the reaction N-(5-phospho-beta-D-ribosyl)anthranilate = 1-(2-carboxyphenylamino)-1-deoxy-D-ribulose 5-phosphate. It participates in amino-acid biosynthesis; L-tryptophan biosynthesis; L-tryptophan from chorismate: step 3/5. The polypeptide is N-(5'-phosphoribosyl)anthranilate isomerase (Geobacter metallireducens (strain ATCC 53774 / DSM 7210 / GS-15)).